Consider the following 49-residue polypeptide: Large ribosomal subunit protein bL33B (49 aa).

It belongs to the bacterial ribosomal protein bL33 family.

The chain is Large ribosomal subunit protein bL33B from Bacillus velezensis (strain DSM 23117 / BGSC 10A6 / LMG 26770 / FZB42) (Bacillus amyloliquefaciens subsp. plantarum).